The following is a 77-amino-acid chain: U11-lycotoxin-Ls1b (77 aa).

A signal peptide spans 1 to 20; sequence MKLIIFTGLALFAIVSLIEA. Positions 21-26 are excised as a propeptide; that stretch reads EEESGR.

The protein belongs to the neurotoxin 19 (CSTX) family. 10 (U11-Lctx) subfamily. Contains 4 disulfide bonds. Expressed by the venom gland.

The protein localises to the secreted. In Lycosa singoriensis (Wolf spider), this protein is U11-lycotoxin-Ls1b.